The chain runs to 427 residues: Adenylosuccinate synthetase (427 aa).

Residues G12 to K18 and G40 to T42 each bind GTP. D13 (proton acceptor) is an active-site residue. Residues D13 and G40 each coordinate Mg(2+). IMP-binding positions include D13–K16, N38–H41, T126, R140, Q221, T236, and R299. H41 functions as the Proton donor in the catalytic mechanism. S295–R301 is a substrate binding site. GTP is bound by residues R301, K327–D329, and S409–G411.

Belongs to the adenylosuccinate synthetase family. In terms of assembly, homodimer. The cofactor is Mg(2+).

Its subcellular location is the cytoplasm. It carries out the reaction IMP + L-aspartate + GTP = N(6)-(1,2-dicarboxyethyl)-AMP + GDP + phosphate + 2 H(+). The protein operates within purine metabolism; AMP biosynthesis via de novo pathway; AMP from IMP: step 1/2. In terms of biological role, plays an important role in the de novo pathway of purine nucleotide biosynthesis. Catalyzes the first committed step in the biosynthesis of AMP from IMP. The protein is Adenylosuccinate synthetase of Borrelia turicatae (strain 91E135).